A 281-amino-acid chain; its full sequence is 2,3,4,5-tetrahydropyridine-2,6-dicarboxylate N-succinyltransferase (281 aa).

Arg-108 and Asp-145 together coordinate substrate.

The protein belongs to the transferase hexapeptide repeat family. Homotrimer.

Its subcellular location is the cytoplasm. The enzyme catalyses (S)-2,3,4,5-tetrahydrodipicolinate + succinyl-CoA + H2O = (S)-2-succinylamino-6-oxoheptanedioate + CoA. It functions in the pathway amino-acid biosynthesis; L-lysine biosynthesis via DAP pathway; LL-2,6-diaminopimelate from (S)-tetrahydrodipicolinate (succinylase route): step 1/3. In Rhodopseudomonas palustris (strain BisA53), this protein is 2,3,4,5-tetrahydropyridine-2,6-dicarboxylate N-succinyltransferase.